Here is an 886-residue protein sequence, read N- to C-terminus: MLRLAGLLLCVTSFLSTSSLGANAGPRLDNDRLYRYSYSAELGLNRPTGSTRGNPGFRISSDVDISLVWRNPEIQDEQLLQVQISNVQVESAGKHSRKNNIFHGSSTESILGKVRLEALQRPFMVLWKMGKIRSLYAHKGEPATIKNLKRGVASMLMMQLKSGKMMEADSSGKCLVEYKATKHQVIRTKHLDTCKTQEKGFTTYSPVLGVSGKSASETVITLENGIIKSADVEETHILSINARHTAATKVLSRQSLTLKKIEVGPTEVAGKDVAGVVKSLDDKFMSVGVIVEKVKAKCKGCPNLMDTWKAVRSKLEPDSLSKAEAPRSFLTLLHSLRKASKAEILTVLRNCSKTALPQLVDAVTSAQTTSSLSAILEFLDFSKKEGLVLQERFLYACGFASHPTETMLQSLLDVSQGKIGSPDIKESVVIIMGALLRKLCLKGACELPTVVKVKELLLAGPDSTQVESEVQMYLLALKNALLPEAVPLLAKYAESEVGAYSTIAITALQRYDPVLITPEVKKTVNRIYHQNQRIYEKNVRAAAADVIMSSSPSYMEVKNVLLSIGHLPHEMNKYMLSKVQDILRFEMPACKLVQQVMKDMISHNYDRFSKTGSSSAFSGFMAQTADVISTYNLDILYSGSGVLRRSNMNIYGQSNNALLHGLQVTIEAQGLESLIAATADEGEEELESFAGMSALLFDVQLRPVTFFKGYSDLMSKMFSMSGDPINVVKGLILLTDHSQVIPLQSGLRASAEFQGGLAIDISGGMEFSLWYRESKTSVNNRGALVVIGNVTVDMDFVSAGVEVGFETEASLDFITTVQFSEYPFLVCMQMDKTTFPFREMVSKQEKLPSGQTFSTKRSRDQLVPGSEFPLHQENSNMCKKVFEQAW.

A signal peptide spans 1–24 (MLRLAGLLLCVTSFLSTSSLGANA). Positions 28–662 (LDNDRLYRYS…QSNNALLHGL (635 aa)) constitute a Vitellogenin domain. Disulfide bonds link Cys174-Cys194 and Cys440-Cys445.

Heterodimer; heterodimerizes with the protein disulfide isomerase. Interacts with apolipoprotein B.

It localises to the endoplasmic reticulum. Catalyzes the transport of triglyceride, cholesteryl ester, and phospholipid between phospholipid surfaces. Required for the secretion of plasma lipoproteins that contain apolipoprotein B. The protein is Microsomal triglyceride transfer protein of Megalobrama amblycephala (Chinese blunt snout bream).